Here is a 346-residue protein sequence, read N- to C-terminus: Uroporphyrinogen decarboxylase (346 aa).

Substrate is bound by residues 23-27 (RQAGR), D73, Y151, S206, and H321.

The protein belongs to the uroporphyrinogen decarboxylase family. Homodimer.

The protein resides in the cytoplasm. It carries out the reaction uroporphyrinogen III + 4 H(+) = coproporphyrinogen III + 4 CO2. The protein operates within porphyrin-containing compound metabolism; protoporphyrin-IX biosynthesis; coproporphyrinogen-III from 5-aminolevulinate: step 4/4. Functionally, catalyzes the decarboxylation of four acetate groups of uroporphyrinogen-III to yield coproporphyrinogen-III. This chain is Uroporphyrinogen decarboxylase, found in Aliarcobacter butzleri (strain RM4018) (Arcobacter butzleri).